The sequence spans 282 residues: Major surface antigen 4 (282 aa).

The first 29 residues, 1–29 (MNYRELFTGGLSAATVCACSLLVSGAVVA), serve as a signal peptide directing secretion.

The protein belongs to the surface antigen msp4 family.

The protein is Major surface antigen 4 (msp4) of Anaplasma marginale.